A 606-amino-acid chain; its full sequence is DNA mismatch repair protein MutL (606 aa).

The tract at residues 340 to 366 (MNAFRPGYSPSGLRPSPSATWSAATSP) is disordered. The segment covering 353 to 366 (RPSPSATWSAATSP) has biased composition (low complexity).

Belongs to the DNA mismatch repair MutL/HexB family.

Functionally, this protein is involved in the repair of mismatches in DNA. It is required for dam-dependent methyl-directed DNA mismatch repair. May act as a 'molecular matchmaker', a protein that promotes the formation of a stable complex between two or more DNA-binding proteins in an ATP-dependent manner without itself being part of a final effector complex. The protein is DNA mismatch repair protein MutL of Agrobacterium fabrum (strain C58 / ATCC 33970) (Agrobacterium tumefaciens (strain C58)).